Consider the following 200-residue polypeptide: Large ribosomal subunit protein uL4 (200 aa).

A disordered region spans residues 38 to 73 (GRQGTKGQKSRSDVSGGGKRPWRQKGTGRARAGTTR).

Belongs to the universal ribosomal protein uL4 family. Part of the 50S ribosomal subunit.

Functionally, one of the primary rRNA binding proteins, this protein initially binds near the 5'-end of the 23S rRNA. It is important during the early stages of 50S assembly. It makes multiple contacts with different domains of the 23S rRNA in the assembled 50S subunit and ribosome. Forms part of the polypeptide exit tunnel. This chain is Large ribosomal subunit protein uL4, found in Ectopseudomonas mendocina (strain ymp) (Pseudomonas mendocina).